Here is a 466-residue protein sequence, read N- to C-terminus: Transcription factor SOX-10 (466 aa).

The disordered stretch occupies residues 1-67 (MAEEQDLSEV…QQDGEADDDK (67 aa)). Residues 23-32 (LSPGSAPSLG) show a composition bias toward low complexity. Phosphoserine is present on Ser24. The segment at 62 to 102 (EADDDKFPVCIREAVSQVLSGYDWTLVPMPVRVNGASKSKP) is dimerization (DIM). Residues 104-172 (VKRPMNAFMV…QHKKDHPDYK (69 aa)) constitute a DNA-binding region (HMG box). The short motif at 134 to 145 (LSKTLGKLWRLL) is the Nuclear export signal element. Basic and acidic residues-rich tracts occupy residues 160–173 (LRMQHKKDHPDYKY) and 254–271 (ADPKRDGRSMGEGGKPHI). Disordered regions lie at residues 160 to 199 (LRMQHKKDHPDYKYQPRRRKNGKAAQGEAECPGGEAEQGG), 212 to 274 (LDHR…IDFG), 354 to 375 (AQVKTETAGPQGPPHYTDQPST), and 433 to 466 (RPLYTAISDPSPSGPQSHSPTHWEQPVYTTLSRP). A transactivation domain (TAM) region spans residues 228–310 (PEHPSGQSHG…LPPNGHPGHV (83 aa)). The tract at residues 353-466 (KAQVKTETAG…QPVYTTLSRP (114 aa)) is transactivation domain (TAC). The span at 440–466 (SDPSPSGPQSHSPTHWEQPVYTTLSRP) shows a compositional bias: polar residues.

As to quaternary structure, monomer. Interacts with ARMCX3 at the mitochondrial outer membrane surface. Interacts with PAX3. As to expression, expressed in fetal brain and in adult brain, heart, small intestine and colon.

It is found in the cytoplasm. Its subcellular location is the nucleus. The protein resides in the mitochondrion outer membrane. Its function is as follows. Transcription factor that plays a central role in developing and mature glia. Specifically activates expression of myelin genes, during oligodendrocyte (OL) maturation, such as DUSP15 and MYRF, thereby playing a central role in oligodendrocyte maturation and CNS myelination. Once induced, MYRF cooperates with SOX10 to implement the myelination program. Transcriptional activator of MITF, acting synergistically with PAX3. Transcriptional activator of MBP, via binding to the gene promoter. This is Transcription factor SOX-10 (SOX10) from Homo sapiens (Human).